Reading from the N-terminus, the 145-residue chain is LIM domain only protein 3 (145 aa).

LIM zinc-binding domains are found at residues 11 to 73 (KGCA…LFGT) and 75 to 137 (GNCA…GLMK).

The sequence is that of LIM domain only protein 3 (Lmo3) from Rattus norvegicus (Rat).